Here is a 249-residue protein sequence, read N- to C-terminus: DNA polymerase sliding clamp (249 aa).

Belongs to the PCNA family. Homotrimer. The subunits circularize to form a toroid; DNA passes through its center. Replication factor C (RFC) is required to load the toroid on the DNA.

Functionally, sliding clamp subunit that acts as a moving platform for DNA processing. Responsible for tethering the catalytic subunit of DNA polymerase and other proteins to DNA during high-speed replication. This is DNA polymerase sliding clamp from Pyrococcus horikoshii (strain ATCC 700860 / DSM 12428 / JCM 9974 / NBRC 100139 / OT-3).